Consider the following 409-residue polypeptide: Probable beta-1,3-galactosyltransferase 3 (409 aa).

Residues 20-42 (WTFLLCFGSFCFGILFTDRMWII) form a helical; Signal-anchor for type II membrane protein membrane-spanning segment.

Belongs to the glycosyltransferase 31 family. Mn(2+) is required as a cofactor.

The protein resides in the golgi apparatus membrane. The protein operates within protein modification; protein glycosylation. Its function is as follows. Beta-1,3-galactosyltransferase that transfers galactose from UDP-galactose to substrates with a terminal glycosyl residue. The polypeptide is Probable beta-1,3-galactosyltransferase 3 (B3GALT3) (Arabidopsis thaliana (Mouse-ear cress)).